The sequence spans 210 residues: Ribosomal RNA small subunit methyltransferase G (210 aa).

Residues G76, M81, 127-128, and R145 contribute to the S-adenosyl-L-methionine site; that span reads VE.

Belongs to the methyltransferase superfamily. RNA methyltransferase RsmG family.

It localises to the cytoplasm. It catalyses the reaction guanosine(527) in 16S rRNA + S-adenosyl-L-methionine = N(7)-methylguanosine(527) in 16S rRNA + S-adenosyl-L-homocysteine. Functionally, specifically methylates the N7 position of guanine in position 527 of 16S rRNA. This is Ribosomal RNA small subunit methyltransferase G from Acinetobacter baumannii (strain AB307-0294).